The following is an 81-amino-acid chain: Putative membrane protein insertion efficiency factor 1 (81 aa).

It belongs to the UPF0161 family.

It localises to the cell membrane. Its function is as follows. Could be involved in insertion of integral membrane proteins into the membrane. This chain is Putative membrane protein insertion efficiency factor 1, found in Bacillus licheniformis (strain ATCC 14580 / DSM 13 / JCM 2505 / CCUG 7422 / NBRC 12200 / NCIMB 9375 / NCTC 10341 / NRRL NRS-1264 / Gibson 46).